A 28-amino-acid chain; its full sequence is Gamma-conotoxin-like de7a (28 aa).

3 disulfides stabilise this stretch: Cys-2-Cys-18, Cys-9-Cys-22, and Cys-17-Cys-27. The residue at position 4 (Pro-4) is a 4-hydroxyproline. 4-carboxyglutamate occurs at positions 13 and 16. Ser-28 is modified (serine amide).

It belongs to the conotoxin O1 superfamily. As to expression, expressed by the venom duct.

Its subcellular location is the secreted. Its function is as follows. Gamma-conotoxins may act on voltage-gated non-specific cation pacemaker channels (HCN). This Conasprella delessertii (Sozon's cone) protein is Gamma-conotoxin-like de7a.